The chain runs to 97 residues: F-actin-capping protein subunit beta (97 aa).

Disordered regions lie at residues 1 to 27 and 43 to 66; these read RLPP…AMPS and KSGS…ETVS. Residues 43 to 57 are compositionally biased toward polar residues; the sequence is KSGSGTMNLGGSLTR. N6-acetyllysine is present on lysine 97.

This sequence belongs to the F-actin-capping protein beta subunit family. Component of the F-actin capping complex, composed of a heterodimer of an alpha and a beta subunit. Subunit of dynactin, a multiprotein complex part of a tripartite complex with dynein and a adapter, such as BICDL1, BICD2 or HOOK3. The dynactin complex is built around ACTR1A/ACTB filament and consists of an actin-related filament composed of a shoulder domain, a pointed end and a barbed end. Its length is defined by its flexible shoulder domain. The soulder is composed of 2 DCTN1 subunits, 4 DCTN2 and 2 DCTN3. The 4 DCNT2 (via N-terminus) bind the ACTR1A filament and act as molecular rulers to determine the length. The pointed end is important for binding dynein-dynactin cargo adapters. Consists of 4 subunits: ACTR10, DCNT4, DCTN5 and DCTN6. The barbed end is composed of a CAPZA1:CAPZB heterodimers, which binds ACTR1A/ACTB filament and dynactin and stabilizes dynactin. Interacts with ARHGAP17. Interaction with RCSD1/CAPZIP. Component of the WASH complex, composed of F-actin-capping protein subunit alpha (CAPZA1, CAPZA2 or CAPZA3), F-actin-capping protein subunit beta (CAPZB), WASH (WASHC1, WASH2P, WASH3P, WASH4P, WASH5P or WASH6P), WASHC2 (WASHC2A or WASHC2C), WASHC3, WASHC4 and WASHC5. Interacts with ACTG1. Directly interacts with CRACD; this interaction decreases binding to actin.

It localises to the cytoplasm. The protein localises to the cytoskeleton. Its subcellular location is the myofibril. The protein resides in the sarcomere. Its function is as follows. F-actin-capping proteins bind in a Ca(2+)-independent manner to the fast growing ends of actin filaments (barbed end) thereby blocking the exchange of subunits at these ends. Unlike other capping proteins (such as gelsolin and severin), these proteins do not sever actin filaments. Plays a role in the regulation of cell morphology and cytoskeletal organization. Forms, with CAPZB, the barbed end of the fast growing ends of actin filaments in the dynactin complex and stabilizes dynactin structure. The dynactin multiprotein complex activates the molecular motor dynein for ultra-processive transport along microtubules. This chain is F-actin-capping protein subunit beta, found in Mesocricetus auratus (Golden hamster).